The following is a 504-amino-acid chain: Xylose import ATP-binding protein XylG (504 aa).

2 consecutive ABC transporter domains span residues 5–242 (LEMK…VGRE) and 259–500 (LRVE…VMEA). Position 37–44 (37–44 (GENGSGKS)) interacts with ATP.

Belongs to the ABC transporter superfamily. Xylose importer (TC 3.A.1.2.4) family. As to quaternary structure, the complex is composed of two ATP-binding proteins (XylG), two transmembrane proteins (XylH) and a solute-binding protein (XylF).

Its subcellular location is the cell inner membrane. The catalysed reaction is D-xylose(out) + ATP + H2O = D-xylose(in) + ADP + phosphate + H(+). Functionally, part of the ABC transporter complex XylFGH involved in xylose import. Responsible for energy coupling to the transport system. The sequence is that of Xylose import ATP-binding protein XylG from Histophilus somni (strain 129Pt) (Haemophilus somnus).